Consider the following 125-residue polypeptide: Holo-[acyl-carrier-protein] synthase (125 aa).

Positions 8 and 57 each coordinate Mg(2+).

Belongs to the P-Pant transferase superfamily. AcpS family. Mg(2+) is required as a cofactor.

The protein resides in the cytoplasm. It catalyses the reaction apo-[ACP] + CoA = holo-[ACP] + adenosine 3',5'-bisphosphate + H(+). Transfers the 4'-phosphopantetheine moiety from coenzyme A to a Ser of acyl-carrier-protein. The protein is Holo-[acyl-carrier-protein] synthase of Nitrosomonas europaea (strain ATCC 19718 / CIP 103999 / KCTC 2705 / NBRC 14298).